We begin with the raw amino-acid sequence, 423 residues long: NDP-N-acetyl-D-galactosaminuronic acid dehydrogenase (423 aa).

Residue 11-28 (TISVVGLGYIGLPTATVL) participates in NAD(+) binding. The active-site Proton donor/acceptor is the lysine 218. Catalysis depends on cysteine 272, which acts as the Nucleophile.

Belongs to the UDP-glucose/GDP-mannose dehydrogenase family.

Functionally, probably involved in synthesis of sugar components of EPS I, by converting NDP-N-acetyl-D-galactosamine into NDP-N-acetyl-D-galactosaminuronic acid. The sequence is that of NDP-N-acetyl-D-galactosaminuronic acid dehydrogenase (epsD) from Ralstonia solanacearum (Pseudomonas solanacearum).